Reading from the N-terminus, the 790-residue chain is MRTYRYFLLLFWVGQPYPTLSTPLSKRTSGFPAKKRALELSGNSKNELNRSKRSWMWNQFFLLEEYTGSDYQYVGKLHSDQDRGDGSLKYILSGDGAGDLFIINENTGDIQATKRLDREEKPVYILRAQAINRRTGRPVEPESEFIIKIHDINDNEPIFTKEVYTATVPEMSDVGTFVVQVTATDADDPTYGNSAKVVYSILQGQPYFSVESETGIIKTALLNMDRENREQYQVVIQAKDMGGQMGGLSGTTTVNITLTDVNDNPPRFPQSTYQFKTPESSPPGTPIGRIKASDADVGENAEIEYSITDGEGLDMFDVITDQETQEGIITVKKLLDFEKKKVYTLKVEASNPYVEPRFLYLGPFKDSATVRIVVEDVDEPPVFSKLAYILQIREDAQINTTIGSVTAQDPDAARNPVKYSVDRHTDMDRIFNIDSGNGSIFTSKLLDRETLLWHNITVIATEINNPKQSSRVPLYIKVLDVNDNAPEFAEFYETFVCEKAKADQLIQTLHAVDKDDPYSGHQFSFSLAPEAASGSNFTIQDNKDNTAGILTRKNGYNRHEMSTYLLPVVISDNDYPVQSSTGTVTVRVCACDHHGNMQSCHAEALIHPTGLSTGALVAILLCIVILLVTVVLFAALRRQRKKEPLIISKEDIRDNIVSYNDEGGGEEDTQAFDIGTLRNPEAIEDNKLRRDIVPEALFLPRRTPTARDNTDVRDFINQRLKENDTDPTAPPYDSLATYAYEGTGSVADSLSSLESVTTDADQDYDYLSDWGPRFKKLADMYGGVDSDKDS.

A signal peptide spans 1-18; the sequence is MRTYRYFLLLFWVGQPYP. Residues 19–53 constitute a propeptide that is removed on maturation; sequence TLSTPLSKRTSGFPAKKRALELSGNSKNELNRSKR. Asn-49 is a glycosylation site (N-linked (GlcNAc...) asparagine). Cadherin domains lie at 54-159, 160-268, 269-383, 384-486, and 487-608; these read SWMW…EPIF, TKEV…PPRF, PQST…PPVF, SKLA…DNAP, and EFAE…LIHP. The Extracellular segment spans residues 54-615; that stretch reads SWMWNQFFLL…IHPTGLSTGA (562 aa). Residue Asn-255 is glycosylated (N-linked (GlcNAc...) asparagine). The tract at residues 259–288 is disordered; that stretch reads TDVNDNPPRFPQSTYQFKTPESSPPGTPIG. A compositionally biased stretch (polar residues) spans 269–279; that stretch reads PQSTYQFKTPE. N-linked (GlcNAc...) asparagine glycosylation is found at Asn-399, Asn-437, Asn-455, and Asn-536. Residues 616–636 traverse the membrane as a helical segment; the sequence is LVAILLCIVILLVTVVLFAAL. At 637–790 the chain is on the cytoplasmic side; the sequence is RRQRKKEPLI…YGGVDSDKDS (154 aa). A phosphoserine mark is found at Ser-786 and Ser-790.

In terms of tissue distribution, highly expressed in brain, cerebellum, and kidney. Lung, pancreas, and gastric mucosa show a weak expression. Also expressed in certain liver and kidney carcinomas.

It localises to the cell membrane. Cadherins are calcium-dependent cell adhesion proteins. They preferentially interact with themselves in a homophilic manner in connecting cells; cadherins may thus contribute to the sorting of heterogeneous cell types. The polypeptide is Cadherin-6 (CDH6) (Homo sapiens (Human)).